We begin with the raw amino-acid sequence, 200 residues long: Signal peptidase complex catalytic subunit SEC11 (200 aa).

At 1–15 the chain is on the cytoplasmic side; that stretch reads MFAELAPYLSNPRQT. Residues 16 to 33 traverse the membrane as a helical; Signal-anchor for type II membrane protein segment; the sequence is LAQLLNFALVLSTAFMGW. At 34–200 the chain is on the lumenal side; that stretch reads KALSVYTNSS…MGVMVMLQRE (167 aa). Residue Asn-41 is glycosylated (N-linked (GlcNAc...) asparagine). Active-site charge relay system residues include Ser-53 and His-92. The segment at 101 to 134 is disordered; that stretch reads GDGGKKSQRRLEREADKRSGPGLSSPVSHQMLTK. Positions 103–119 are enriched in basic and acidic residues; sequence GGKKSQRRLEREADKRS. Asp-142 functions as the Charge relay system in the catalytic mechanism. Positions 186–197 are C-terminal short (CTS) helix; the sequence is VLLGIMGVMVML.

The protein belongs to the peptidase S26B family. In terms of assembly, component of the signal peptidase complex (SPC) composed of a catalytic subunit SEC11 and three accessory subunits SPC1, SPC2 and SPC3. The complex induces a local thinning of the ER membrane which is used to measure the length of the signal peptide (SP) h-region of protein substrates. This ensures the selectivity of the complex towards h-regions shorter than 18-20 amino acids. SPC associates with the translocon complex.

The protein resides in the endoplasmic reticulum membrane. It catalyses the reaction Cleavage of hydrophobic, N-terminal signal or leader sequences from secreted and periplasmic proteins.. Functionally, catalytic component of the signal peptidase complex (SPC) which catalyzes the cleavage of N-terminal signal sequences from nascent proteins as they are translocated into the lumen of the endoplasmic reticulum. Specifically cleaves N-terminal signal peptides that contain a hydrophobic alpha-helix (h-region) shorter than 18-20 amino acids. The chain is Signal peptidase complex catalytic subunit SEC11 (SEC11) from Arthroderma benhamiae (strain ATCC MYA-4681 / CBS 112371) (Trichophyton mentagrophytes).